The sequence spans 145 residues: Hemoglobin subunit beta (145 aa).

The Globin domain occupies 1–145; that stretch reads MLTAEEKAAV…VANALAHRYH (145 aa). Thr11 bears the Phosphothreonine mark. Ser43 carries the post-translational modification Phosphoserine. N6-acetyllysine is present on Lys58. His62 provides a ligand contact to heme b. At Lys81 the chain carries N6-acetyllysine. His91 lines the heme b pocket. Cys92 carries the post-translational modification S-nitrosocysteine.

The protein belongs to the globin family. In terms of assembly, heterotetramer of two alpha chains and two beta chains. Red blood cells.

Its function is as follows. Involved in oxygen transport from the lung to the various peripheral tissues. This is Hemoglobin subunit beta (HBB) from Bos mutus grunniens (Wild yak).